A 383-amino-acid chain; its full sequence is Deoxyguanosinetriphosphate triphosphohydrolase-like protein (383 aa).

An HD domain is found at 62-198 (RLTHSLEVST…AALADDISYI (137 aa)).

This sequence belongs to the dGTPase family. Type 2 subfamily.

This is Deoxyguanosinetriphosphate triphosphohydrolase-like protein from Rickettsia felis (strain ATCC VR-1525 / URRWXCal2) (Rickettsia azadi).